We begin with the raw amino-acid sequence, 453 residues long: Phosphoglucosamine mutase (453 aa).

The active-site Phosphoserine intermediate is serine 110. Positions 110, 247, 249, and 251 each coordinate Mg(2+). Residue serine 110 is modified to Phosphoserine.

This sequence belongs to the phosphohexose mutase family. Requires Mg(2+) as cofactor. Activated by phosphorylation.

The catalysed reaction is alpha-D-glucosamine 1-phosphate = D-glucosamine 6-phosphate. Its function is as follows. Catalyzes the conversion of glucosamine-6-phosphate to glucosamine-1-phosphate. The protein is Phosphoglucosamine mutase of Tropheryma whipplei (strain TW08/27) (Whipple's bacillus).